The following is an 87-amino-acid chain: Small ribosomal subunit protein bS20 (87 aa).

The segment at 1–27 (MANIKSAKKRAIQSEKRRQHNASRRSM) is disordered.

The protein belongs to the bacterial ribosomal protein bS20 family.

In terms of biological role, binds directly to 16S ribosomal RNA. This chain is Small ribosomal subunit protein bS20, found in Aeromonas salmonicida (strain A449).